The chain runs to 1391 residues: DNA-directed RNA polymerase subunit beta' (1391 aa).

The Zn(2+) site is built by C72, C74, C87, and C90. Residues D462, D464, and D466 each coordinate Mg(2+). The Zn(2+) site is built by C816, C890, C897, and C900.

This sequence belongs to the RNA polymerase beta' chain family. In terms of assembly, the RNAP catalytic core consists of 2 alpha, 1 beta, 1 beta' and 1 omega subunit. When a sigma factor is associated with the core the holoenzyme is formed, which can initiate transcription. Requires Mg(2+) as cofactor. Zn(2+) serves as cofactor.

The catalysed reaction is RNA(n) + a ribonucleoside 5'-triphosphate = RNA(n+1) + diphosphate. DNA-dependent RNA polymerase catalyzes the transcription of DNA into RNA using the four ribonucleoside triphosphates as substrates. The protein is DNA-directed RNA polymerase subunit beta' of Neisseria meningitidis serogroup C (strain 053442).